The primary structure comprises 294 residues: Type 4 apparatus protein DotZ (294 aa).

In terms of assembly, the T4BSS is a complex nanomachine composed of several subcomplexes. This subunit is part of the Type IV Coupling Complex (T4CC), a subcomplex composed of the DotLMNYZ core and the IcmSW-LvgA adapter subunits, linked by the C-terminal tail of DotL. Six DotLMNYZ hetero-pentameric units may assemble into a hexameric nanomachine, forming an inner membrane channel for effectors to pass through. Makes significant contact with DotN and DotY, but engages weakly with DotM and DotL. DotY and DotZ are co-dependent for the assembly into the T4CC.

It is found in the cytoplasm. Functionally, component of the Dot/Icm type IVB secretion system (T4BSS), which is used to inject bacterial effector proteins into eukaryotic host cells. Part of a subcomplex which recruits effector proteins and delivers them to the core transmembrane subcomplex. DotY and DotZ play a role in effector translocation, but are not essential and do not influence the stability of the subcomplex main components. The DotY/DotZ main function is to optimize secretion by modulating the delivery trajectory of the IcmSW module and the localization of the machinery to the poles. In Legionella pneumophila subsp. pneumophila (strain Philadelphia 1 / ATCC 33152 / DSM 7513), this protein is Type 4 apparatus protein DotZ.